Reading from the N-terminus, the 145-residue chain is MASLRRLTELLCLPVTATAADIKTAYRRTALKYHPDKGGDEEKMKELNTLMEEFRETEGLRADETLEDSDPEPEESGYATFENVSVPDIDGAFFKLMKLKKCMQTYFSVNERRKQDIRPEYFELFKAFQDVPWKVLEDFFTSEMF.

The 77-residue stretch at 6-82 (RLTELLCLPV…PEESGYATFE (77 aa)) folds into the J domain. Positions 58–80 (EGLRADETLEDSDPEPEESGYAT) are disordered. Positions 65-75 (TLEDSDPEPEE) are enriched in acidic residues.

Interacts with host PPP2R1A; the interaction inhibits PP2A activity.

The protein resides in the host cytoplasm. Its subcellular location is the host nucleus. Its function is as follows. Promotes efficient viral genome replication by accelerating both G1 and S phase progression of the cell cycle. The polypeptide is Small t antigen (Budgerigar fledgling disease virus (BFPyV)).